Reading from the N-terminus, the 360-residue chain is Peptide chain release factor 1 (360 aa).

Gln237 is modified (N5-methylglutamine).

This sequence belongs to the prokaryotic/mitochondrial release factor family. Methylated by PrmC. Methylation increases the termination efficiency of RF1.

Its subcellular location is the cytoplasm. In terms of biological role, peptide chain release factor 1 directs the termination of translation in response to the peptide chain termination codons UAG and UAA. In Pseudomonas fluorescens (strain ATCC BAA-477 / NRRL B-23932 / Pf-5), this protein is Peptide chain release factor 1.